The sequence spans 110 residues: UPF0060 membrane protein Rpic_4131 (110 aa).

4 helical membrane-spanning segments follow: residues 8–28 (VLFA…WLVL), 33–53 (PFWL…LLTL), 65–85 (YGGV…GVAL), and 88–108 (WDVG…LQPQ).

Belongs to the UPF0060 family.

The protein resides in the cell inner membrane. This is UPF0060 membrane protein Rpic_4131 from Ralstonia pickettii (strain 12J).